A 308-amino-acid polypeptide reads, in one-letter code: Carbonic anhydrase 6 (308 aa).

The signal sequence occupies residues 1 to 17; that stretch reads MRALVLLLSLFLLGGQA. The region spanning 21-278 is the Alpha-carbonic anhydrase domain; it reads SDWTYSEGAL…LNHRVVESNF (258 aa). A disulfide bond links Cys-42 and Cys-224. A glycan (N-linked (GlcNAc...) asparagine) is linked at Asn-67. His-85 serves as the catalytic Proton donor/acceptor. Zn(2+) is bound by residues His-111, His-113, and His-138. 220–221 lines the substrate pocket; the sequence is TT. Asn-256 carries an N-linked (GlcNAc...) asparagine glycan.

This sequence belongs to the alpha-carbonic anhydrase family. Zn(2+) is required as a cofactor. As to expression, major constituent of saliva.

The protein localises to the secreted. It carries out the reaction hydrogencarbonate + H(+) = CO2 + H2O. With respect to regulation, inhibited by coumarins, sulfonamide derivatives such as acetazolamide (AZA), saccharin and Foscarnet (phosphonoformate trisodium salt). In terms of biological role, reversible hydration of carbon dioxide. Its role in saliva is unknown. This Homo sapiens (Human) protein is Carbonic anhydrase 6 (CA6).